Here is a 352-residue protein sequence, read N- to C-terminus: Protein-glutamate methylesterase/protein-glutamine glutaminase (352 aa).

In terms of domain architecture, Response regulatory spans 5-122 (RAIVIDDSAF…SLDIRNVEDE (118 aa)). Asp56 is subject to 4-aspartylphosphate. The 190-residue stretch at 163 to 352 (RSIVSIGTST…IPSLIVKQLT (190 aa)) folds into the CheB-type methylesterase domain. Active-site residues include Ser171, His198, and Asp294.

Belongs to the CheB family. Phosphorylated by CheA. Phosphorylation of the N-terminal regulatory domain activates the methylesterase activity.

It localises to the cytoplasm. The catalysed reaction is [protein]-L-glutamate 5-O-methyl ester + H2O = L-glutamyl-[protein] + methanol + H(+). It carries out the reaction L-glutaminyl-[protein] + H2O = L-glutamyl-[protein] + NH4(+). Functionally, involved in chemotaxis. Part of a chemotaxis signal transduction system that modulates chemotaxis in response to various stimuli. Catalyzes the demethylation of specific methylglutamate residues introduced into the chemoreceptors (methyl-accepting chemotaxis proteins or MCP) by CheR. Also mediates the irreversible deamidation of specific glutamine residues to glutamic acid. In Oceanobacillus iheyensis (strain DSM 14371 / CIP 107618 / JCM 11309 / KCTC 3954 / HTE831), this protein is Protein-glutamate methylesterase/protein-glutamine glutaminase.